Here is a 206-residue protein sequence, read N- to C-terminus: Alpha-S1-casein (206 aa).

An N-terminal signal peptide occupies residues M1–A15. Phosphoserine is present on residues S33, S77, S78, S79, S80, S81, S82, and S89. The segment at H67–Y106 is disordered. Residues E91–D100 are compositionally biased toward basic and acidic residues.

Belongs to the alpha-casein family. As to expression, mammary gland specific. Secreted in milk.

It is found in the secreted. Functionally, important role in the capacity of milk to transport calcium phosphate. The chain is Alpha-S1-casein (CSN1S1) from Sus scrofa (Pig).